Reading from the N-terminus, the 167-residue chain is NADH-quinone oxidoreductase subunit B (167 aa).

Positions 40, 41, 105, and 134 each coordinate [4Fe-4S] cluster.

This sequence belongs to the complex I 20 kDa subunit family. In terms of assembly, NDH-1 is composed of 14 different subunits. Subunits NuoB, C, D, E, F, and G constitute the peripheral sector of the complex. [4Fe-4S] cluster serves as cofactor.

Its subcellular location is the cell inner membrane. The enzyme catalyses a quinone + NADH + 5 H(+)(in) = a quinol + NAD(+) + 4 H(+)(out). Functionally, NDH-1 shuttles electrons from NADH, via FMN and iron-sulfur (Fe-S) centers, to quinones in the respiratory chain. The immediate electron acceptor for the enzyme in this species is believed to be ubiquinone. Couples the redox reaction to proton translocation (for every two electrons transferred, four hydrogen ions are translocated across the cytoplasmic membrane), and thus conserves the redox energy in a proton gradient. This chain is NADH-quinone oxidoreductase subunit B, found in Campylobacter jejuni (strain RM1221).